The primary structure comprises 573 residues: Oxygen sensor histidine kinase response regulator DosT (573 aa).

GAF domains lie at 61–198 (KLDA…GIAV) and 229–366 (DPAM…ALAW). Residue His-147 coordinates heme. The 194-residue stretch at 380-573 (ILTDRDRIAR…TLLRWSAPLR (194 aa)) folds into the Histidine kinase domain. Residue His-392 is modified to Phosphohistidine; by autocatalysis.

Mg(2+) is required as a cofactor. The cofactor is heme.

The protein resides in the cytoplasm. Interacts with the two-component regulatory system DevR/DevS (DosR/DosS) involved in onset of the dormancy response. Required for full induction of the DevR (DosR) regulon; required during early adaptation to anaerobiosis, to start induction of the DevR regulon. May act as a direct hypoxia/oxygen sensor. May be the secondary sensor for CO. Donates a phosphate group to DevR (DosR). The chain is Oxygen sensor histidine kinase response regulator DosT (dosT) from Mycobacterium tuberculosis (strain CDC 1551 / Oshkosh).